We begin with the raw amino-acid sequence, 72 residues long: Translation initiation factor IF-1 (72 aa).

The S1-like domain maps to 1–72 (MAKEEMLEFP…TKGRINYRFK (72 aa)).

Belongs to the IF-1 family. Component of the 30S ribosomal translation pre-initiation complex which assembles on the 30S ribosome in the order IF-2 and IF-3, IF-1 and N-formylmethionyl-tRNA(fMet); mRNA recruitment can occur at any time during PIC assembly.

It is found in the cytoplasm. One of the essential components for the initiation of protein synthesis. Stabilizes the binding of IF-2 and IF-3 on the 30S subunit to which N-formylmethionyl-tRNA(fMet) subsequently binds. Helps modulate mRNA selection, yielding the 30S pre-initiation complex (PIC). Upon addition of the 50S ribosomal subunit IF-1, IF-2 and IF-3 are released leaving the mature 70S translation initiation complex. This is Translation initiation factor IF-1 from Jannaschia sp. (strain CCS1).